The chain runs to 125 residues: uncharacterized protein (125 aa).

This is an uncharacterized protein from Dictyostelium discoideum (Social amoeba).